A 353-amino-acid chain; its full sequence is Casein kinase II subunit alpha (353 aa).

The 286-residue stretch at 39 to 324 (YQLVRKLGRG…AREAMDHPYF (286 aa)) folds into the Protein kinase domain. Residues 45–53 (LGRGKYSEV) and Lys68 contribute to the ATP site. The active-site Proton acceptor is Asp156. Residues 334–353 (MVSSNSPTPNALQGPISTTE) form a disordered region.

It belongs to the protein kinase superfamily. Ser/Thr protein kinase family. CK2 subfamily. As to quaternary structure, tetramer of two alpha and two beta chains.

It catalyses the reaction L-seryl-[protein] + ATP = O-phospho-L-seryl-[protein] + ADP + H(+). It carries out the reaction L-threonyl-[protein] + ATP = O-phospho-L-threonyl-[protein] + ADP + H(+). Casein kinases are operationally defined by their preferential utilization of acidic proteins such as caseins as substrates. The alpha chain contains the catalytic site. May participate in Wnt signaling. The polypeptide is Casein kinase II subunit alpha (Spodoptera frugiperda (Fall armyworm)).